Here is a 962-residue protein sequence, read N- to C-terminus: Protocadherin gamma-A4 (962 aa).

The disordered stretch occupies residues 1–24 (MHFILDPEDPGAPQASTEGKPKHR). The N-terminal stretch at 1–59 (MHFILDPEDPGAPQASTEGKPKHRRLRGGVVMAAPPARPDHTRLLQICLLLGVLVEIRA) is a signal peptide. 6 Cadherin domains span residues 60-164 (EQIL…PPSF), 165-273 (GTEQ…APVF), 274-378 (TQPE…APEV), 379-483 (TVTS…PPTF), 484-598 (PHAS…YPTF), and 601-713 (DGST…KPSA). Over 60–723 (EQILYSVFEE…DPDDSGLTLY (664 aa)) the chain is Extracellular. Residues N450 and N576 are each glycosylated (N-linked (GlcNAc...) asparagine). A helical transmembrane segment spans residues 724–744 (LVVAVAAVSCVFLAFVTVLLA). Residues 745-962 (LKLRRWHKSR…KKKSGKKEKK (218 aa)) are Cytoplasmic-facing. Disordered stretches follow at residues 832-871 (KGDP…WPNN) and 932-962 (ATLT…KEKK). Residues 836–871 (NLQQAPPNTDWRFSQAQRPGTSGSQNGDDTGTWPNN) are compositionally biased toward polar residues. Basic residues predominate over residues 952-962 (NKKKSGKKEKK).

It is found in the cell membrane. Functionally, potential calcium-dependent cell-adhesion protein. May be involved in the establishment and maintenance of specific neuronal connections in the brain. This Homo sapiens (Human) protein is Protocadherin gamma-A4 (PCDHGA4).